A 341-amino-acid polypeptide reads, in one-letter code: MAKSHTLNPEEEFEEESGLRPSLLSEFIGQKEVLNNLTVYVQAAKNRKRALDHVLISGPPGLGKTTLAGIVSNELGTRLTITSAPVITKGADLARLLTSVGENEILFIDEIHTLHKKLEEILYPAMENYMIDLVIGEGVTAQMVQIPLKPFTLVGATTRSGLISEPLKSRFGIQLRLDYYNDEEMKEIVLRSSRILGVKIEDDAALEIGKRSRKTPRIANHLLKRIRDFSEVEGNLSVKKGLCLKAFEKMGIDDLGLDGMDRQILGCMIDRYKGGPVGLKAIAVVVGEEEKTIEDTYESFMVRIGLINRTPAGRVATEKAYRQLKRMQDFSENHGQDPTLF.

The large ATPase domain (RuvB-L) stretch occupies residues 1-180 (MAKSHTLNPE…FGIQLRLDYY (180 aa)). The ATP site is built by Leu-19, Arg-20, Gly-61, Lys-64, Thr-65, Thr-66, Arg-170, Tyr-180, and Arg-217. A Mg(2+)-binding site is contributed by Thr-65. The interval 181 to 251 (NDEEMKEIVL…LCLKAFEKMG (71 aa)) is small ATPAse domain (RuvB-S). Positions 254–341 (DLGLDGMDRQ…ENHGQDPTLF (88 aa)) are head domain (RuvB-H). Residues Arg-309 and Arg-314 each coordinate DNA.

This sequence belongs to the RuvB family. As to quaternary structure, homohexamer. Forms an RuvA(8)-RuvB(12)-Holliday junction (HJ) complex. HJ DNA is sandwiched between 2 RuvA tetramers; dsDNA enters through RuvA and exits via RuvB. An RuvB hexamer assembles on each DNA strand where it exits the tetramer. Each RuvB hexamer is contacted by two RuvA subunits (via domain III) on 2 adjacent RuvB subunits; this complex drives branch migration. In the full resolvosome a probable DNA-RuvA(4)-RuvB(12)-RuvC(2) complex forms which resolves the HJ.

It is found in the cytoplasm. It catalyses the reaction ATP + H2O = ADP + phosphate + H(+). Functionally, the RuvA-RuvB-RuvC complex processes Holliday junction (HJ) DNA during genetic recombination and DNA repair, while the RuvA-RuvB complex plays an important role in the rescue of blocked DNA replication forks via replication fork reversal (RFR). RuvA specifically binds to HJ cruciform DNA, conferring on it an open structure. The RuvB hexamer acts as an ATP-dependent pump, pulling dsDNA into and through the RuvAB complex. RuvB forms 2 homohexamers on either side of HJ DNA bound by 1 or 2 RuvA tetramers; 4 subunits per hexamer contact DNA at a time. Coordinated motions by a converter formed by DNA-disengaged RuvB subunits stimulates ATP hydrolysis and nucleotide exchange. Immobilization of the converter enables RuvB to convert the ATP-contained energy into a lever motion, pulling 2 nucleotides of DNA out of the RuvA tetramer per ATP hydrolyzed, thus driving DNA branch migration. The RuvB motors rotate together with the DNA substrate, which together with the progressing nucleotide cycle form the mechanistic basis for DNA recombination by continuous HJ branch migration. Branch migration allows RuvC to scan DNA until it finds its consensus sequence, where it cleaves and resolves cruciform DNA. The protein is Holliday junction branch migration complex subunit RuvB of Leptospira borgpetersenii serovar Hardjo-bovis (strain JB197).